The chain runs to 217 residues: Transcriptional regulator NovE (217 aa).

The interval 1–41 (MVASGRTASKGRGNGATPVRPTAGDATPVDSGQPSDTTYGG) is disordered.

Transcription regulator that specifically regulates expression of genes involved in the novobiocin biosynthesis pathway. Probably acts as a positive regulator of transcription. Does not bind DNA. The sequence is that of Transcriptional regulator NovE (novE) from Streptomyces niveus (Streptomyces spheroides).